The chain runs to 438 residues: Protein maelstrom 1 (438 aa).

The segment at residues 2–69 is a DNA-binding region (HMG box); sequence APKKRNGFMT…LERTAKKERL (68 aa). The disordered stretch occupies residues 374 to 438; it reads KEMGSRDLSP…NMGAGKKIAR (65 aa). Positions 381–391 are enriched in polar residues; that stretch reads LSPSSSHQSVS.

Belongs to the maelstrom family.

The protein resides in the cytoplasm. It is found in the nucleus. Its function is as follows. Involved both in the piRNA and miRNA metabolic processes. As a component of the meiotic nuage, plays a central role during oogenesis by repressing transposable elements and preventing their mobilization, which is essential for the germline integrity. Repression of transposable elements is mediated via the piRNA metabolic process, which mediates the repression of transposable elements during meiosis by forming complexes composed of piRNAs and Piwi proteins and governs the repression of transposons. As a nuclear component, it is required for proper differentiation in the germline stem cell (GSC) lineage by repressing microRNA-7 (miR-7), thereby acting as an indirect regulator of bag-of-marbles (Bam). Acts by binding to the promoter of miR-7 gene and repressing its expression; miR-7 repression alleviates the Bam repression by miR-7, thereby allowing differentiation in the germline stem cell (GSC) lineage. The protein is Protein maelstrom 1 (mael1) of Drosophila persimilis (Fruit fly).